An 85-amino-acid chain; its full sequence is MAQKINITNIPARRPFGRRRKVDPFTGQHAQEIDYKDVKMLQRYISEKGKIVPSRITAVNLKNQRKLAQAIKRARMLALIPFEVK.

It belongs to the bacterial ribosomal protein bS18 family. Part of the 30S ribosomal subunit. Forms a tight heterodimer with protein bS6.

In terms of biological role, binds as a heterodimer with protein bS6 to the central domain of the 16S rRNA, where it helps stabilize the platform of the 30S subunit. This chain is Small ribosomal subunit protein bS18, found in Hyphomonas neptunium (strain ATCC 15444).